Here is a 919-residue protein sequence, read N- to C-terminus: Alpha-amylase (919 aa).

Positions 1–33 (MPATRRTARVRRVAAVTVTALAAALLPPLAARA) are cleaved as a signal peptide. Residues N182 and D281 each contribute to the Ca(2+) site. D312 functions as the Nucleophile in the catalytic mechanism. A Ca(2+)-binding site is contributed by H316. E346 serves as the catalytic Proton donor. The disordered stretch occupies residues 704 to 729 (ASGRLHHRHPARRGGAHRRLPGPRGR). Residues 707–724 (RLHHRHPARRGGAHRRLP) are compositionally biased toward basic residues.

The protein belongs to the glycosyl hydrolase 13 family. In terms of assembly, monomer. Ca(2+) serves as cofactor.

The protein localises to the secreted. The enzyme catalyses Endohydrolysis of (1-&gt;4)-alpha-D-glucosidic linkages in polysaccharides containing three or more (1-&gt;4)-alpha-linked D-glucose units.. This is Alpha-amylase (amy) from Streptomyces lividans.